The following is a 414-amino-acid chain: uncharacterized protein (414 aa).

Residues 367 to 384 form a helical membrane-spanning segment; that stretch reads TTWALTLICIACILLFFV.

The protein localises to the virion membrane. This is an uncharacterized protein from Human cytomegalovirus (strain Merlin) (HHV-5).